The chain runs to 106 residues: Nucleoid-associated protein Abu_0429 (106 aa).

Belongs to the YbaB/EbfC family. Homodimer.

The protein resides in the cytoplasm. Its subcellular location is the nucleoid. Binds to DNA and alters its conformation. May be involved in regulation of gene expression, nucleoid organization and DNA protection. In Aliarcobacter butzleri (strain RM4018) (Arcobacter butzleri), this protein is Nucleoid-associated protein Abu_0429.